The chain runs to 315 residues: Porphobilinogen deaminase (315 aa).

C245 is subject to S-(dipyrrolylmethanemethyl)cysteine.

It belongs to the HMBS family. Monomer. The cofactor is dipyrromethane.

The enzyme catalyses 4 porphobilinogen + H2O = hydroxymethylbilane + 4 NH4(+). The protein operates within porphyrin-containing compound metabolism; protoporphyrin-IX biosynthesis; coproporphyrinogen-III from 5-aminolevulinate: step 2/4. It participates in porphyrin-containing compound metabolism; chlorophyll biosynthesis. In terms of biological role, tetrapolymerization of the monopyrrole PBG into the hydroxymethylbilane pre-uroporphyrinogen in several discrete steps. The chain is Porphobilinogen deaminase from Prochlorococcus marinus (strain NATL1A).